A 475-amino-acid chain; its full sequence is Ribosomal RNA small subunit methyltransferase F (475 aa).

Residues 125–131 (AAAPGSK), E149, D176, and D194 each bind S-adenosyl-L-methionine. The active-site Nucleophile is C247.

This sequence belongs to the class I-like SAM-binding methyltransferase superfamily. RsmB/NOP family.

The protein localises to the cytoplasm. It catalyses the reaction cytidine(1407) in 16S rRNA + S-adenosyl-L-methionine = 5-methylcytidine(1407) in 16S rRNA + S-adenosyl-L-homocysteine + H(+). Its function is as follows. Specifically methylates the cytosine at position 1407 (m5C1407) of 16S rRNA. The protein is Ribosomal RNA small subunit methyltransferase F of Aeromonas hydrophila subsp. hydrophila (strain ATCC 7966 / DSM 30187 / BCRC 13018 / CCUG 14551 / JCM 1027 / KCTC 2358 / NCIMB 9240 / NCTC 8049).